A 193-amino-acid chain; its full sequence is Hypoxanthine/guanine phosphoribosyltransferase (193 aa).

The protein belongs to the purine/pyrimidine phosphoribosyltransferase family. Archaeal HPRT subfamily. Homodimer.

It is found in the cytoplasm. It catalyses the reaction IMP + diphosphate = hypoxanthine + 5-phospho-alpha-D-ribose 1-diphosphate. The catalysed reaction is GMP + diphosphate = guanine + 5-phospho-alpha-D-ribose 1-diphosphate. Its pathway is purine metabolism; IMP biosynthesis via salvage pathway; IMP from hypoxanthine: step 1/1. In terms of biological role, catalyzes a salvage reaction resulting in the formation of IMP that is energically less costly than de novo synthesis. This Methanothermobacter thermautotrophicus (strain ATCC 29096 / DSM 1053 / JCM 10044 / NBRC 100330 / Delta H) (Methanobacterium thermoautotrophicum) protein is Hypoxanthine/guanine phosphoribosyltransferase.